The chain runs to 589 residues: Progranulin (589 aa).

The signal sequence occupies residues 1–17 (MWVLMSWLAFAAGLVAG). N-linked (GlcNAc...) asparagine glycosylation occurs at Asn-38. 2 disulfide bridges follow: Cys-125–Cys-138 and Cys-132–Cys-148. Asn-263 carries N-linked (GlcNAc...) asparagine glycosylation. Intrachain disulfides connect Cys-282/Cys-294, Cys-288/Cys-304, Cys-295/Cys-312, Cys-305/Cys-319, Cys-313/Cys-326, Cys-320/Cys-333, Cys-364/Cys-376, Cys-370/Cys-386, Cys-395/Cys-408, and Cys-402/Cys-414. An N-linked (GlcNAc...) asparagine glycan is attached at Asn-373. Residue Asn-526 is glycosylated (N-linked (GlcNAc...) asparagine).

Belongs to the granulin family. In terms of assembly, progranulin is secreted as a homodimer. Interacts with SLPI; interaction protects progranulin from proteolysis. Interacts (via region corresponding to granulin-7 peptide) with CTSD; stabilizes CTSD and increases its proteolytic activity. Interacts (via region corresponding to granulin-7 peptide) with SORT1; this interaction mediates endocytosis and lysosome delivery of progranulin; interaction occurs at the neuronal cell surface in a stressed nervous system. Interacts with PSAP; facilitates lysosomal delivery of progranulin from the extracellular space and the biosynthetic pathway. Forms a complex with PSAP and M6PR; PSAP bridges the binding between progranulin and M6PR. Forms a complex with PSAP and SORT1; progranulin bridges the interaction between PSAP and SORT1; facilitates lysosomal targeting of PSAP via SORT1; interaction enhances PSAP uptake in primary cortical neurons. Interacts (via regions corresponding to granulin-2 and granulin-7 peptides) with GBA1; this interaction prevents aggregation of GBA1-SCARB2 complex via interaction with HSPA1A upon stress. Interacts (via region corresponding to granulin-7 peptide) with HSPA1A; mediates recruitment of HSPA1A to GBA1 and prevents GBA1 aggregation in response to stress. Post-translationally, N-glycosylated. In terms of processing, cleaved by ELANE; proteolysis is blocked by SLPI and is concentration- and time-dependent and induces CXCL8/IL-8 production; granulin-3 and granulin-4 are resistant to ELANE. Cleaved by CTSL in lysosome thus regulating the maturation and turnover of progranulin within the lysosome. Highly expressed at the wound site and diminishes away from the wound. Not expressed in fibroblasts and endothelial cells in intact skin. In adult brain, expressed primarily in neurons and in resting and reactive microglia. Expressed in both neurons and microglia. Highly expressed in activated microglia in response to injury. Expressed in macrophage.

The protein resides in the secreted. It localises to the lysosome. Secreted protein that acts as a key regulator of lysosomal function and as a growth factor involved in inflammation, wound healing and cell proliferation. Regulates protein trafficking to lysosomes, and also the activity of lysosomal enzymes. Also facilitates the acidification of lysosomes, causing degradation of mature CTSD by CTSB. In addition, functions as a wound-related growth factor that acts directly on dermal fibroblasts and endothelial cells to promote division, migration and the formation of capillary-like tubule structures. Also promotes epithelial cell proliferation by blocking TNF-mediated neutrophil activation preventing release of oxidants and proteases. Moreover, modulates inflammation in neurons by preserving neurons survival, axonal outgrowth and neuronal integrity. In terms of biological role, inhibits epithelial cell proliferation and induces epithelial cells to secrete IL-8. Functionally, stabilizes CTSD through interaction with CTSD leading to maintain its aspartic-type peptidase activity. The polypeptide is Progranulin (Grn) (Mus musculus (Mouse)).